The sequence spans 339 residues: Phenylalanine--tRNA ligase alpha subunit (339 aa).

Position 254 (Glu-254) interacts with Mg(2+).

Belongs to the class-II aminoacyl-tRNA synthetase family. Phe-tRNA synthetase alpha subunit type 1 subfamily. Tetramer of two alpha and two beta subunits. Requires Mg(2+) as cofactor.

It localises to the cytoplasm. The enzyme catalyses tRNA(Phe) + L-phenylalanine + ATP = L-phenylalanyl-tRNA(Phe) + AMP + diphosphate + H(+). The chain is Phenylalanine--tRNA ligase alpha subunit from Clostridium beijerinckii (strain ATCC 51743 / NCIMB 8052) (Clostridium acetobutylicum).